We begin with the raw amino-acid sequence, 379 residues long: Homoserine O-succinyltransferase (379 aa).

The region spanning N51–L360 is the AB hydrolase-1 domain. Residue S157 is the Nucleophile of the active site. R227 is a binding site for substrate. Residues D323 and H356 contribute to the active site. D357 is a substrate binding site.

Belongs to the AB hydrolase superfamily. MetX family. In terms of assembly, homodimer.

The protein resides in the cytoplasm. The enzyme catalyses L-homoserine + succinyl-CoA = O-succinyl-L-homoserine + CoA. It participates in amino-acid biosynthesis; L-methionine biosynthesis via de novo pathway; O-succinyl-L-homoserine from L-homoserine: step 1/1. In terms of biological role, transfers a succinyl group from succinyl-CoA to L-homoserine, forming succinyl-L-homoserine. The protein is Homoserine O-succinyltransferase of Pseudomonas paraeruginosa (strain DSM 24068 / PA7) (Pseudomonas aeruginosa (strain PA7)).